The sequence spans 183 residues: Large ribosomal subunit protein uL5 (183 aa).

Belongs to the universal ribosomal protein uL5 family. In terms of assembly, part of the 50S ribosomal subunit; part of the 5S rRNA/L5/L18/L25 subcomplex. Contacts the 5S rRNA and the P site tRNA. Forms a bridge to the 30S subunit in the 70S ribosome.

In terms of biological role, this is one of the proteins that bind and probably mediate the attachment of the 5S RNA into the large ribosomal subunit, where it forms part of the central protuberance. In the 70S ribosome it contacts protein S13 of the 30S subunit (bridge B1b), connecting the 2 subunits; this bridge is implicated in subunit movement. Contacts the P site tRNA; the 5S rRNA and some of its associated proteins might help stabilize positioning of ribosome-bound tRNAs. The chain is Large ribosomal subunit protein uL5 from Christiangramia forsetii (strain DSM 17595 / CGMCC 1.15422 / KT0803) (Gramella forsetii).